The following is a 384-amino-acid chain: L-cysteine:1D-myo-inositol 2-amino-2-deoxy-alpha-D-glucopyranoside ligase (384 aa).

Position 16 (cysteine 16) interacts with Zn(2+). L-cysteinyl-5'-AMP-binding positions include 16 to 19 (CGIT), threonine 31, and 54 to 56 (NVT). Residues 18–28 (ITPYDATHLGH) carry the 'HIGH' region motif. Positions 159–164 (QSGGDP) match the 'ERGGDP' region motif. Tryptophan 199 serves as a coordination point for L-cysteinyl-5'-AMP. Zn(2+) is bound at residue cysteine 203. Position 221–223 (221–223 (GSD)) interacts with L-cysteinyl-5'-AMP. Residue histidine 228 coordinates Zn(2+). Isoleucine 255 is a binding site for L-cysteinyl-5'-AMP. The short motif at 261-265 (KMSKS) is the 'KMSKS' region element.

Belongs to the class-I aminoacyl-tRNA synthetase family. MshC subfamily. In terms of assembly, monomer. Zn(2+) is required as a cofactor.

It catalyses the reaction 1D-myo-inositol 2-amino-2-deoxy-alpha-D-glucopyranoside + L-cysteine + ATP = 1D-myo-inositol 2-(L-cysteinylamino)-2-deoxy-alpha-D-glucopyranoside + AMP + diphosphate + H(+). In terms of biological role, catalyzes the ATP-dependent condensation of GlcN-Ins and L-cysteine to form L-Cys-GlcN-Ins. The protein is L-cysteine:1D-myo-inositol 2-amino-2-deoxy-alpha-D-glucopyranoside ligase of Mycobacterium leprae (strain Br4923).